The sequence spans 748 residues: Catalase-peroxidase (748 aa).

Positions Trp92–Tyr238 form a cross-link, tryptophyl-tyrosyl-methioninium (Trp-Tyr) (with M-264). His93 serves as the catalytic Proton acceptor. The segment at residues Tyr238–Met264 is a cross-link (tryptophyl-tyrosyl-methioninium (Tyr-Met) (with W-92)). A heme b-binding site is contributed by His279.

The protein belongs to the peroxidase family. Peroxidase/catalase subfamily. As to quaternary structure, homodimer or homotetramer. It depends on heme b as a cofactor. Post-translationally, formation of the three residue Trp-Tyr-Met cross-link is important for the catalase, but not the peroxidase activity of the enzyme.

The enzyme catalyses H2O2 + AH2 = A + 2 H2O. It carries out the reaction 2 H2O2 = O2 + 2 H2O. Bifunctional enzyme with both catalase and broad-spectrum peroxidase activity. In Xanthomonas euvesicatoria pv. vesicatoria (strain 85-10) (Xanthomonas campestris pv. vesicatoria), this protein is Catalase-peroxidase.